Consider the following 166-residue polypeptide: Transmembrane protein 278 (166 aa).

Acidic residues predominate over residues 1–15 (MSDQERETEEDEGGD). A disordered region spans residues 1 to 28 (MSDQERETEEDEGGDPSDTAPMLPQRLP). 3 helical membrane passes run 39–59 (GWAS…WALA), 65–85 (LLLP…VVYL), and 111–131 (AAVI…ASAA).

This sequence belongs to the TMEM88 family.

The protein resides in the membrane. The protein is Transmembrane protein 278 (TMEM278) of Bos taurus (Bovine).